The primary structure comprises 375 residues: Trichodiene synthase (375 aa).

This sequence belongs to the trichodiene synthase family.

It carries out the reaction (2E,6E)-farnesyl diphosphate = trichodiene + diphosphate. The protein operates within sesquiterpene biosynthesis; trichothecene biosynthesis. Its function is as follows. TS is a member of the terpene cyclase group of enzymes. It catalyzes the isomerization and cyclization of farnesyl pyro-phosphate to form trichodiene, the first cyclic intermediate in the biosynthetic pathway for trichothecenes. It serves to branch trichothecene biosynthesis from the isoprenoid pathway. The polypeptide is Trichodiene synthase (TRI5) (Fusarium asiaticum).